The sequence spans 107 residues: Anti-adapter protein IraM (107 aa).

The protein belongs to the IraM/RssC family.

The protein localises to the cytoplasm. Inhibits RpoS proteolysis by regulating RssB activity, thereby increasing the stability of the sigma stress factor RpoS during magnesium starvation. The sequence is that of Anti-adapter protein IraM from Shigella dysenteriae serotype 1 (strain Sd197).